Consider the following 297-residue polypeptide: ClpXP adapter protein SpxH (297 aa).

The protein belongs to the SpxH family. Interacts with Spx.

It localises to the cytoplasm. Adapter protein required for efficient degradation of Spx by ClpXP under non-stress conditions. Interaction with Spx stabilizes Spx and exposes the C-terminus of Spx for recognition and proteolysis by ClpXP. The sequence is that of ClpXP adapter protein SpxH from Bacillus cereus (strain ZK / E33L).